The chain runs to 545 residues: ATP synthase F(1) complex subunit alpha, mitochondrial (545 aa).

Residues Gln-216, Gly-218, Lys-219, Thr-220, and Ser-221 each coordinate ATP. Position 220 (Thr-220) interacts with Mg(2+). Asp-304 is a binding site for Mg(2+). Gln-465 and Gln-467 together coordinate ATP.

This sequence belongs to the ATPase alpha/beta chains family. Homotrimer. Component of the ATP synthase complex composed at least of ATP5F1A/subunit alpha, ATP5F1B/subunit beta, ATP5MC1/subunit c (homooctomer), MT-ATP6/subunit a, MT-ATP8/subunit 8, ATP5ME/subunit e, ATP5MF/subunit f, ATP5MG/subunit g, ATP5MK/subunit k, ATP5MJ/subunit j, ATP5F1C/subunit gamma, ATP5F1D/subunit delta, ATP5F1E/subunit epsilon, ATP5PF/subunit F6, ATP5PB/subunit b, ATP5PD/subunit d, ATP5PO/subunit OSCP. ATP synthase complex consists of a soluble F(1) head domain (subunits alpha(3) and beta(3)) - the catalytic core - and a membrane F(0) domain - the membrane proton channel (subunits c, a, 8, e, f, g, k and j). These two domains are linked by a central stalk (subunits gamma, delta, and epsilon) rotating inside the F1 region and a stationary peripheral stalk (subunits F6, b, d, and OSCP).

It localises to the mitochondrion inner membrane. Subunit alpha, of the mitochondrial membrane ATP synthase complex (F(1)F(0) ATP synthase or Complex V) that produces ATP from ADP in the presence of a proton gradient across the membrane which is generated by electron transport complexes of the respiratory chain. ATP synthase complex consist of a soluble F(1) head domain - the catalytic core - and a membrane F(1) domain - the membrane proton channel. These two domains are linked by a central stalk rotating inside the F(1) region and a stationary peripheral stalk. During catalysis, ATP synthesis in the catalytic domain of F(1) is coupled via a rotary mechanism of the central stalk subunits to proton translocation. In vivo, can only synthesize ATP although its ATP hydrolase activity can be activated artificially in vitro. With the catalytic subunit beta (ATP5F1B), forms the catalytic core in the F(1) domain. Subunit alpha does not bear the catalytic high-affinity ATP-binding sites. The polypeptide is ATP synthase F(1) complex subunit alpha, mitochondrial (Xenopus laevis (African clawed frog)).